Consider the following 440-residue polypeptide: MGQSQSGGHGPGGGKKDDKDKKKKYEPPVPTRVGKKKKKTKGPDAASKLPLVTPHTQCRLKLLKLERIKDYLLMEEEFIRNQEQMKPLEEKQEEERSKVDDLRGTPMSVGTLEEIIDDNHAIVSTSVGSEHYVSILSFVDKDLLEPGCSVLLNHKVHAVIGVLMDDTDPLVTVMKVEKAPQETYADIGGLDNQIQEIKESVELPLTHPEYYEEMGIKPPKGVILYGPPGTGKTLLAKAVANQTSATFLRVVGSELIQKYLGDGPKLVRELFRVAEEHAPSIVFIDEIDAIGTKRYDSNSGGEREIQRTMLELLNQLDGFDSRGDVKVIMATNRIETLDPALIRPGRIDRKIEFPLPDEKTKKRIFQIHTSRMTLADDVTLDDLIMAKDDLSGADIKAICTEAGLMALRERRMKVTNEDFKKSKENVLYKKQEGTPEGLYL.

Residues 1-13 show a composition bias toward gly residues; the sequence is MGQSQSGGHGPGG. Positions 1-49 are disordered; that stretch reads MGQSQSGGHGPGGGKKDDKDKKKKYEPPVPTRVGKKKKKTKGPDAASKL. Residue G2 is the site of N-myristoyl glycine attachment. Phosphoserine is present on S4. Residues 14–26 are compositionally biased toward basic and acidic residues; that stretch reads GKKDDKDKKKKYE. At T53 the chain carries Phosphothreonine. Residues 84–104 form a disordered region; the sequence is QMKPLEEKQEEERSKVDDLRG. Basic and acidic residues predominate over residues 86 to 103; the sequence is KPLEEKQEEERSKVDDLR. ATP is bound at residue 226–233; the sequence is GPPGTGKT. K237 is covalently cross-linked (Glycyl lysine isopeptide (Lys-Gly) (interchain with G-Cter in ubiquitin)). K258 bears the N6-acetyllysine mark. A Phosphothreonine modification is found at T434. Y439 is modified (phosphotyrosine).

The protein belongs to the AAA ATPase family. In terms of assembly, component of the 19S proteasome regulatory particle complex. The 26S proteasome consists of a 20S core particle (CP) and two 19S regulatory subunits (RP). The regulatory particle is made of a lid composed of 9 subunits, a base containing 6 ATPases including PSMC1 and few additional components. Interacts with SCA7. Interacts with NGLY1. Interacts with PAAF1.

Its subcellular location is the cytoplasm. It localises to the nucleus. The protein resides in the membrane. Functionally, component of the 26S proteasome, a multiprotein complex involved in the ATP-dependent degradation of ubiquitinated proteins. This complex plays a key role in the maintenance of protein homeostasis by removing misfolded or damaged proteins, which could impair cellular functions, and by removing proteins whose functions are no longer required. Therefore, the proteasome participates in numerous cellular processes, including cell cycle progression, apoptosis, or DNA damage repair. PSMC1 belongs to the heterohexameric ring of AAA (ATPases associated with diverse cellular activities) proteins that unfolds ubiquitinated target proteins that are concurrently translocated into a proteolytic chamber and degraded into peptides. In Homo sapiens (Human), this protein is 26S proteasome regulatory subunit 4 (PSMC1).